The sequence spans 239 residues: Protein TIPIN homolog (239 aa).

2 stretches are compositionally biased toward acidic residues: residues 1 to 14 (MDEM…DELD) and 156 to 166 (DGADDDEDDLF). Disordered stretches follow at residues 1-38 (MDEM…RRII) and 135-239 (ESTD…NNDW). 2 stretches are compositionally biased toward basic and acidic residues: residues 169–193 (LPEK…EKKN) and 206–223 (YRMM…AREA). A compositionally biased stretch (acidic residues) spans 224–239 (EAEDELMEDFDLNNDW).

It belongs to the CSM3 family.

Its subcellular location is the cytoplasm. It localises to the nucleus. In terms of biological role, required for normal progression of S-phase. Important for cell survival after DNA damage or replication stress. The protein is Protein TIPIN homolog of Caenorhabditis briggsae.